We begin with the raw amino-acid sequence, 156 residues long: Deoxyuridine 5'-triphosphate nucleotidohydrolase (156 aa).

Residues 76 to 78, Asn-89, 93 to 95, and Lys-103 each bind substrate; these read RSG and TVD.

Belongs to the dUTPase family. Mg(2+) serves as cofactor.

The enzyme catalyses dUTP + H2O = dUMP + diphosphate + H(+). It participates in pyrimidine metabolism; dUMP biosynthesis; dUMP from dCTP (dUTP route): step 2/2. This enzyme is involved in nucleotide metabolism: it produces dUMP, the immediate precursor of thymidine nucleotides and it decreases the intracellular concentration of dUTP so that uracil cannot be incorporated into DNA. The chain is Deoxyuridine 5'-triphosphate nucleotidohydrolase from Rhizobium etli (strain CIAT 652).